The primary structure comprises 137 residues: Large ribosomal subunit protein uL16 (137 aa).

Basic residues predominate over residues 1 to 19; sequence MLSPKKVKFRKQQRGRRTG. The segment at 1 to 20 is disordered; that stretch reads MLSPKKVKFRKQQRGRRTGT.

This sequence belongs to the universal ribosomal protein uL16 family. Part of the 50S ribosomal subunit.

Functionally, binds 23S rRNA and is also seen to make contacts with the A and possibly P site tRNAs. The polypeptide is Large ribosomal subunit protein uL16 (Desulfosudis oleivorans (strain DSM 6200 / JCM 39069 / Hxd3) (Desulfococcus oleovorans)).